The sequence spans 149 residues: Arginine repressor (149 aa).

This sequence belongs to the ArgR family.

It is found in the cytoplasm. The protein operates within amino-acid biosynthesis; L-arginine biosynthesis [regulation]. In terms of biological role, regulates arginine biosynthesis genes. The chain is Arginine repressor from Halalkalibacterium halodurans (strain ATCC BAA-125 / DSM 18197 / FERM 7344 / JCM 9153 / C-125) (Bacillus halodurans).